We begin with the raw amino-acid sequence, 577 residues long: 5'-nucleotidase (577 aa).

The N-terminal stretch at 1–30 (MPRVPSASATGSSALLSLLCAFSLGRAAPF) is a signal peptide. Zn(2+)-binding residues include Asp-39, His-41, Asp-86, and Asn-118. A glycan (N-linked (GlcNAc...) asparagine) is linked at Asn-135. Positions 221 and 244 each coordinate Zn(2+). A substrate-binding site is contributed by Asn-246. 2 N-linked (GlcNAc...) asparagine glycosylation sites follow: Asn-311 and Asn-347. 2 cysteine pairs are disulfide-bonded: Cys-353-Cys-358 and Cys-365-Cys-387. Arg-354 serves as a coordination point for substrate. Residues Gln-390 and Arg-395 each coordinate substrate. N-linked (GlcNAc...) asparagine glycosylation is present at Asn-403. A substrate-binding site is contributed by Phe-417. An intrachain disulfide couples Cys-476 to Cys-479. A substrate-binding site is contributed by 500–506 (YIAEGGD). A lipid anchor (GPI-anchor amidated serine) is attached at Ser-552. Positions 553–577 (ATLPIINLKIGLSLFAFLTWFLHCS) are cleaved as a propeptide — removed in mature form.

Belongs to the 5'-nucleotidase family. Homodimer. Zn(2+) is required as a cofactor.

It is found in the cell membrane. It carries out the reaction a ribonucleoside 5'-phosphate + H2O = a ribonucleoside + phosphate. Its function is as follows. Hydrolyzes extracellular nucleotides into membrane permeable nucleosides. The sequence is that of 5'-nucleotidase from Diplobatis ommata (Ocellated electric ray).